Reading from the N-terminus, the 78-residue chain is Acyl carrier protein (78 aa).

A Carrier domain is found at 2–77; sequence STIEERVKKI…AAIDYVNSHK (76 aa). Ser-37 carries the O-(pantetheine 4'-phosphoryl)serine modification.

The protein belongs to the acyl carrier protein (ACP) family. 4'-phosphopantetheine is transferred from CoA to a specific serine of apo-ACP by AcpS. This modification is essential for activity because fatty acids are bound in thioester linkage to the sulfhydryl of the prosthetic group.

It is found in the cytoplasm. The protein operates within lipid metabolism; fatty acid biosynthesis. Carrier of the growing fatty acid chain in fatty acid biosynthesis. The sequence is that of Acyl carrier protein from Pseudomonas putida (strain GB-1).